A 614-amino-acid chain; its full sequence is Ankyrin repeat domain-containing protein 55 (614 aa).

A disordered region spans residues 1–20; that stretch reads MMRQATMDFSTPSVFDQQRG. Positions 7 to 16 are enriched in polar residues; it reads MDFSTPSVFD. ANK repeat units follow at residues 26–55, 60–89, 93–125, 126–157, 161–190, 194–223, 230–260, 264–293, and 297–326; these read VDLT…SILE, EGCT…NINM, YGRT…IPDK, NGRL…EINH, EGMT…DPTL, DFKT…GPSI, SGKT…NLQA, DDRT…DSNL, and NEST…TEPT. Disordered regions lie at residues 319-339, 354-375, 454-476, and 564-614; these read QESR…PQKK, KKEE…EEDT, TSHA…SRSE, and RNNL…SDEN. Basic and acidic residues predominate over residues 354 to 373; it reads KKEEQRAHQKDPSRDRYREE. The residue at position 475 (S475) is a Phosphoserine.

In Homo sapiens (Human), this protein is Ankyrin repeat domain-containing protein 55 (ANKRD55).